A 274-amino-acid chain; its full sequence is Large ribosomal subunit protein uL2 (274 aa).

The tract at residues 195 to 274 (VGNSDHGLER…SKYIIERRKK (80 aa)) is disordered. 2 stretches are compositionally biased toward basic residues: residues 207-220 (KAGR…RPRN) and 244-264 (PRSR…KKQS).

The protein belongs to the universal ribosomal protein uL2 family. As to quaternary structure, part of the 50S ribosomal subunit. Forms a bridge to the 30S subunit in the 70S ribosome.

One of the primary rRNA binding proteins. Required for association of the 30S and 50S subunits to form the 70S ribosome, for tRNA binding and peptide bond formation. It has been suggested to have peptidyltransferase activity; this is somewhat controversial. Makes several contacts with the 16S rRNA in the 70S ribosome. This is Large ribosomal subunit protein uL2 from Bacteroides thetaiotaomicron (strain ATCC 29148 / DSM 2079 / JCM 5827 / CCUG 10774 / NCTC 10582 / VPI-5482 / E50).